The sequence spans 170 residues: Small ribosomal subunit protein uS5 (170 aa).

Residues 12 to 75 (WSELLVSVRR…NAAKKSMIRV (64 aa)) form the S5 DRBM domain.

This sequence belongs to the universal ribosomal protein uS5 family. As to quaternary structure, part of the 30S ribosomal subunit. Contacts proteins S4 and S8.

Its function is as follows. With S4 and S12 plays an important role in translational accuracy. Functionally, located at the back of the 30S subunit body where it stabilizes the conformation of the head with respect to the body. The protein is Small ribosomal subunit protein uS5 of Wolbachia sp. subsp. Brugia malayi (strain TRS).